The following is a 568-amino-acid chain: Protein yellow (568 aa).

Residues 1–28 form the signal peptide; that stretch reads MHAQDKGGILPALSLLLIAVAMVSPSQA. Residues N151 and N222 are each glycosylated (N-linked (GlcNAc...) asparagine).

Belongs to the major royal jelly protein family.

It localises to the secreted. In terms of biological role, controls the pigmentation pattern of the adult cuticle and larval mouth parts. The sequence is that of Protein yellow (y) from Drosophila subobscura (Fruit fly).